The following is a 121-amino-acid chain: Histone H2B (121 aa).

The segment at 1–27 (MAPKKAPAAAEKKVKKAPTTEKKNKKK) is disordered. A2 is modified (n,N,N-trimethylalanine). N6-acetyllysine is present on residues K5 and K41. Residue K115 forms a Glycyl lysine isopeptide (Lys-Gly) (interchain with G-Cter in ubiquitin) linkage.

Belongs to the histone H2B family. As to quaternary structure, the nucleosome is a histone octamer containing two molecules each of H2A, H2B, H3 and H4 assembled in one H3-H4 heterotetramer and two H2A-H2B heterodimers. The octamer wraps approximately 147 bp of DNA. Post-translationally, monoubiquitination of Lys-115 gives a specific tag for epigenetic transcriptional activation and is also prerequisite for histone H3 'Lys-4' and 'Lys-79' methylation. Acetylation occurs almost exclusively in the MAC.

It is found in the nucleus. Its subcellular location is the chromosome. Its function is as follows. Core component of nucleosome. Nucleosomes wrap and compact DNA into chromatin, limiting DNA accessibility to the cellular machineries which require DNA as a template. Histones thereby play a central role in transcription regulation, DNA repair, DNA replication and chromosomal stability. DNA accessibility is regulated via a complex set of post-translational modifications of histones, also called histone code, and nucleosome remodeling. In Tetrahymena pyriformis, this protein is Histone H2B.